Reading from the N-terminus, the 981-residue chain is MDGFAGSLDDSISAASTSDVQDRLSALESRVQQQEDEITVLKAALADVLRRLAISEDHVASVKKSVSSKGQPSPRAVIPMSCITNGSGANRKPSHTSAVSIAGKETLSSAAKSGTEKKKEKPQGQREKKEESHSNDQSPQIRASPSPQPSSQPLQIHRQTPESKNATPTKSIKRPSPAEKSHNSWENSDDSRNKLSKIPSTPKLIPKVTKTADKHKDVIINQEGEYIKMFMRGRPITMFIPSDVDNYDDIRTELPPEKLKLEWAYGYRGKDCRANVYLLPTGKIVYFIASVVVLFNYEERTQRHYLGHTDCVKCLAIHPDKIRIATGQIAGVDKDGRPLQPHVRVWDSVTLSTLQIIGLGTFERGVGCLDFSKADSGVHLCIIDDSNEHMLTVWDWQKKAKGAEIKTTNEVVLAVEFHPTDANTIITCGKSHIFFWTWSGNSLTRKQGIFGKYEKPKFVQCLAFLGNGDVLTGDSGGVMLIWSKTTVEPTPGKGPKGVYQISKQIKAHDGSVFTLCQMRNGMLLTGGGKDRKIILWDHDLNPEREIEVPDQYGTIRAVAEGKADQFLVGTSRNFILRGTFNDGFQIEVQGHTDELWGLATHPFKDLLLTCAQDRQVCLWNSMEHRLEWTRLVDEPGHCADFHPSGTVVAIGTHSGRWFVLDAETRDLVSIHTDGNEQLSVMRYSIDGTFLAVGSHDNFIYLYVVSENGRKYSRYGRCTGHSSYITHLDWSPDNKYIMSNSGDYEILYWDIPNGCKLIRNRSDCKDIDWTTYTCVLGFQVFGVWPEGSDGTDINALVRSHNRKVIAVADDFCKVHLFQYPCSKAKAPSHKYSAHSSHVTNVSFTHNDSHLISTGGKDMSIIQWKLVEKLSLPQNETVADTTLTKAPVSSTESVIQSNTPTPPPSQPLNETAEEESRISSSPTLLENSLEQTVEPSEDHSEEESEEGSGDLGEPLYEEPCNEISKEQAKATLLEDQQDPSPSS.

At Met1 the chain carries N-acetylmethionine. 2 disordered regions span residues Met1–Val20 and Asp57–Ile205. The tract at residues Met1–Asp249 is microtubule-binding. Ser7, Ser13, Ser16, and Ser61 each carry phosphoserine. Residues Ala14–Lys63 are a coiled coil. Position 96 is a phosphothreonine (Thr96). The span at Gly114–Ser134 shows a compositional bias: basic and acidic residues. A Phosphoserine; by NEK7 modification is found at Ser134. Low complexity predominate over residues Gln137–Gln155. The residue at position 144 (Ser144) is a Phosphoserine; by NEK6. Position 146 is a phosphoserine; by NEK7 (Ser146). Position 171 is a phosphoserine (Ser171). Residues Ser176–Asn193 are compositionally biased toward basic and acidic residues. Residue Ser200 is modified to Phosphoserine. A Phosphothreonine modification is found at Thr201. The residue at position 226 (Tyr226) is a Phosphotyrosine. A Phosphothreonine modification is found at Thr237. 5 WD repeats span residues Leu259–Tyr297, Thr301–Ser348, Ile356–Trp396, Ala403–Trp438, and Arg445–Lys484. Position 490 is a phosphothreonine; by NEK6 (Thr490). WD repeat units lie at residues Gln500–His538, Glu543–Thr579, Asp582–Ser621, Arg625–Ala662, Val668–Val704, Tyr711–Ile750, Arg760–Tyr818, and Ala825–Leu864. Thr609 is subject to Phosphothreonine; by NEK6 and NEK7. Residues Leu881–Ile893 are compositionally biased toward polar residues. Residues Leu881–Ser981 are disordered. Ser891 and Ser895 each carry phosphoserine. Residues Thr897 and Thr899 each carry the phosphothreonine modification. Ser903 carries the phosphoserine modification. Positions Ile916 to Val931 are enriched in polar residues. Over residues His937–Ser946 the composition is skewed to acidic residues. At Ser978 the chain carries Phosphoserine. Ser981 bears the Phosphoserine; by NEK6 and NEK7 mark.

Belongs to the WD repeat EMAP family. In terms of assembly, homotrimer; self-association is mediated by the N-terminal coiled coil. Interacts (via WD repeats) with NUDC. Interacts with alpha- and beta-tubulin during mitosis. In terms of processing, phosphorylated during mitosis. Phosphorylation at Ser-144 and Ser-146 promotes its dissociation from microtubules during mitosis which is required for efficient chromosome congression.

The protein localises to the cytoplasm. It localises to the cytoskeleton. Its subcellular location is the spindle. The protein resides in the microtubule organizing center. It is found in the midbody. In terms of biological role, essential for the formation and stability of microtubules (MTs). Required for the organization of the mitotic spindle and for the proper attachment of kinetochores to MTs. Promotes the recruitment of NUDC to the mitotic spindle for mitotic progression. The chain is Echinoderm microtubule-associated protein-like 4 (EML4) from Homo sapiens (Human).